The primary structure comprises 435 residues: Tol-Pal system protein TolB (435 aa).

The signal sequence occupies residues Met1–Ala26.

It belongs to the TolB family. As to quaternary structure, the Tol-Pal system is composed of five core proteins: the inner membrane proteins TolA, TolQ and TolR, the periplasmic protein TolB and the outer membrane protein Pal. They form a network linking the inner and outer membranes and the peptidoglycan layer.

Its subcellular location is the periplasm. In terms of biological role, part of the Tol-Pal system, which plays a role in outer membrane invagination during cell division and is important for maintaining outer membrane integrity. This chain is Tol-Pal system protein TolB, found in Allorhizobium ampelinum (strain ATCC BAA-846 / DSM 112012 / S4) (Agrobacterium vitis (strain S4)).